The primary structure comprises 217 residues: Protein GrpE (217 aa).

Belongs to the GrpE family. In terms of assembly, homodimer.

The protein resides in the cytoplasm. Functionally, participates actively in the response to hyperosmotic and heat shock by preventing the aggregation of stress-denatured proteins, in association with DnaK and GrpE. It is the nucleotide exchange factor for DnaK and may function as a thermosensor. Unfolded proteins bind initially to DnaJ; upon interaction with the DnaJ-bound protein, DnaK hydrolyzes its bound ATP, resulting in the formation of a stable complex. GrpE releases ADP from DnaK; ATP binding to DnaK triggers the release of the substrate protein, thus completing the reaction cycle. Several rounds of ATP-dependent interactions between DnaJ, DnaK and GrpE are required for fully efficient folding. The protein is Protein GrpE of Mycoplasma pneumoniae (strain ATCC 29342 / M129 / Subtype 1) (Mycoplasmoides pneumoniae).